The following is a 186-amino-acid chain: Lipid A acyltransferase PagP (186 aa).

The N-terminal stretch at 1-25 (MNVSKYVAIFSFVFIQLISVGKVFA) is a signal peptide. Residues histidine 58, aspartate 101, and serine 102 contribute to the active site.

Belongs to the lipid A palmitoyltransferase family. In terms of assembly, homodimer.

It is found in the cell outer membrane. The enzyme catalyses a lipid A + a 1,2-diacyl-sn-glycero-3-phosphocholine = a hepta-acyl lipid A + a 2-acyl-sn-glycero-3-phosphocholine. It catalyses the reaction a lipid IVA + a 1,2-diacyl-sn-glycero-3-phosphocholine = a lipid IVB + a 2-acyl-sn-glycero-3-phosphocholine. The catalysed reaction is a lipid IIA + a 1,2-diacyl-sn-glycero-3-phosphocholine = a lipid IIB + a 2-acyl-sn-glycero-3-phosphocholine. Its function is as follows. Transfers a fatty acid residue from the sn-1 position of a phospholipid to the N-linked hydroxyfatty acid chain on the proximal unit of lipid A or its precursors. The protein is Lipid A acyltransferase PagP of Shigella boydii serotype 4 (strain Sb227).